We begin with the raw amino-acid sequence, 188 residues long: Protein GrpE 2 (188 aa).

Positions 1–29 are enriched in basic and acidic residues; it reads MDNQEKKTNYQNTDKENDLEKNKEKKNDE. The segment at 1-33 is disordered; the sequence is MDNQEKKTNYQNTDKENDLEKNKEKKNDESIFQ.

Belongs to the GrpE family. Homodimer.

It is found in the cytoplasm. Participates actively in the response to hyperosmotic and heat shock by preventing the aggregation of stress-denatured proteins, in association with DnaK and GrpE. It is the nucleotide exchange factor for DnaK and may function as a thermosensor. Unfolded proteins bind initially to DnaJ; upon interaction with the DnaJ-bound protein, DnaK hydrolyzes its bound ATP, resulting in the formation of a stable complex. GrpE releases ADP from DnaK; ATP binding to DnaK triggers the release of the substrate protein, thus completing the reaction cycle. Several rounds of ATP-dependent interactions between DnaJ, DnaK and GrpE are required for fully efficient folding. This Buchnera aphidicola subsp. Schizaphis graminum (strain Sg) protein is Protein GrpE 2.